Consider the following 182-residue polypeptide: MLVLVLGDLHIPHRCNTLPAKFKKLLVPGKIQHILCTGNLCTKESYDYLKTLAGDVHIVRGDFDENLNYPEQKVVTVGQFKIGLIHGHQVIPWGDMASLALLQRQLDVDILISGHTHKFEAFENENKFYINPGSATGAYSALESNITPSFVLMDIQASTVVTYVYQLIGDDVKVERIEYKKS.

Belongs to the VPS29 family. In terms of assembly, component of the commander complex consisting of the CCC subcomplex and the retriever subcomplex. Component of the heterotrimeric retriever complex formed by vps26c, vps29 and vps35l; within the complex interacts with vps35l. Component of the heterotrimeric retromer cargo-selective complex (CSC), also described as vacuolar protein sorting subcomplex (VPS), formed by vps26 (vps26a or vps26b), vps29 and vps35. The CSC has a highly elongated structure with vps26 and vps29 binding independently at opposite distal ends of vps35 as central platform.

The protein localises to the cytoplasm. Its subcellular location is the membrane. The protein resides in the endosome membrane. Component of the commander complex that is essential for endosomal recycling of transmembrane cargos; the commander complex is composed of the CCC subcomplex and the retriever subcomplex. Component of the retriever complex, which is a heterotrimeric complex related to retromer cargo-selective complex (CSC) and essential for retromer-independent retrieval and recycling of numerous cargos. Component of the retromer cargo-selective complex (CSC). The CSC is believed to be the core functional component of retromer or respective retromer complex variants acting to prevent missorting of selected transmembrane cargo proteins into the lysosomal degradation pathway. In the endosomes, retriever complex drives the retrieval and recycling of NxxY-motif-containing cargo proteins by coupling to snx17, a cargo essential for the homeostatic maintenance of numerous cell surface proteins associated with processes that include cell migration, cell adhesion, nutrient supply and cell signaling. The recruitment of the retriever complex to the endosomal membrane involves CCC and WASH complexes. The chain is Vacuolar protein sorting-associated protein 29 (vps29) from Danio rerio (Zebrafish).